A 389-amino-acid polypeptide reads, in one-letter code: LL-diaminopimelate aminotransferase (389 aa).

Residues tyrosine 13 and glycine 38 each contribute to the substrate site. Residues tyrosine 67, 101–102 (SK), tyrosine 126, asparagine 176, tyrosine 207, and 235–237 (SLS) each bind pyridoxal 5'-phosphate. Substrate contacts are provided by lysine 102, tyrosine 126, and asparagine 176. Lysine 238 is modified (N6-(pyridoxal phosphate)lysine). Arginine 246 serves as a coordination point for pyridoxal 5'-phosphate. Arginine 364 lines the substrate pocket.

The protein belongs to the class-I pyridoxal-phosphate-dependent aminotransferase family. LL-diaminopimelate aminotransferase subfamily. Homodimer. Pyridoxal 5'-phosphate serves as cofactor.

It catalyses the reaction (2S,6S)-2,6-diaminopimelate + 2-oxoglutarate = (S)-2,3,4,5-tetrahydrodipicolinate + L-glutamate + H2O + H(+). Its pathway is amino-acid biosynthesis; L-lysine biosynthesis via DAP pathway; LL-2,6-diaminopimelate from (S)-tetrahydrodipicolinate (aminotransferase route): step 1/1. Involved in the synthesis of meso-diaminopimelate (m-DAP or DL-DAP), required for both lysine and peptidoglycan biosynthesis. Catalyzes the direct conversion of tetrahydrodipicolinate to LL-diaminopimelate. In Halothermothrix orenii (strain H 168 / OCM 544 / DSM 9562), this protein is LL-diaminopimelate aminotransferase.